The following is a 302-amino-acid chain: MRITVLSGSDSPEREVSLVSGRAVQAALETLGHEVTMVDPGPDLPVRLLENPPDFVWIALHGDKGENGKLQGLLDWLGLPYNGSGVTASAIAMDKVVSKRLFVAEGIPTPAYRVAEAVPQVSECQAWLAALGSPVVVKPADGGSTVGVTIAREAGHLPEAVRLALQYSPQVLIEQYIPGQEITVALLDGLVLPAIEIVPQGRDFYDYEAKYAPGGSRHLIPPNLAADVLKASVDAAYRACRAVGSTGLVRADVRVDPEGRPWVLEVNTLPGMTATSLAPEAAQAAGIDFEQLIQRIIDRSLD.

The 200-residue stretch at 99-298 (KRLFVAEGIP…FEQLIQRIID (200 aa)) folds into the ATP-grasp domain. Residue 128 to 183 (LAALGSPVVVKPADGGSTVGVTIAREAGHLPEAVRLALQYSPQVLIEQYIPGQEIT) coordinates ATP. Mg(2+) is bound by residues aspartate 252, glutamate 265, and asparagine 267.

It belongs to the D-alanine--D-alanine ligase family. It depends on Mg(2+) as a cofactor. The cofactor is Mn(2+).

The protein resides in the cytoplasm. The enzyme catalyses 2 D-alanine + ATP = D-alanyl-D-alanine + ADP + phosphate + H(+). The protein operates within cell wall biogenesis; peptidoglycan biosynthesis. Its function is as follows. Cell wall formation. This Gloeobacter violaceus (strain ATCC 29082 / PCC 7421) protein is D-alanine--D-alanine ligase.